The sequence spans 211 residues: Orotate phosphoribosyltransferase (211 aa).

Lysine 26 serves as a coordination point for 5-phospho-alpha-D-ribose 1-diphosphate. Position 34-35 (34-35) interacts with orotate; sequence FF. 5-phospho-alpha-D-ribose 1-diphosphate-binding positions include 72 to 73, arginine 98, lysine 99, lysine 102, histidine 104, and 123 to 131; these read YK and DDVITAGTA. Residues threonine 127 and arginine 155 each contribute to the orotate site.

It belongs to the purine/pyrimidine phosphoribosyltransferase family. PyrE subfamily. Homodimer. Mg(2+) serves as cofactor.

The enzyme catalyses orotidine 5'-phosphate + diphosphate = orotate + 5-phospho-alpha-D-ribose 1-diphosphate. It participates in pyrimidine metabolism; UMP biosynthesis via de novo pathway; UMP from orotate: step 1/2. Functionally, catalyzes the transfer of a ribosyl phosphate group from 5-phosphoribose 1-diphosphate to orotate, leading to the formation of orotidine monophosphate (OMP). The sequence is that of Orotate phosphoribosyltransferase from Legionella pneumophila (strain Lens).